The primary structure comprises 348 residues: ECA polysaccharide chain length modulation protein (348 aa).

A run of 2 helical transmembrane segments spans residues 31 to 51 (FWIIGIGLLFALIALAYTFFA) and 323 to 343 (AFLMIMWGIVGALIGAGVALT).

This sequence belongs to the WzzB/Cld/Rol family. In terms of assembly, probably part of a complex composed of WzxE, WzyE and WzzE.

It localises to the cell inner membrane. It participates in bacterial outer membrane biogenesis; enterobacterial common antigen biosynthesis. Modulates the polysaccharide chain length of enterobacterial common antigen (ECA). The sequence is that of ECA polysaccharide chain length modulation protein from Salmonella typhimurium (strain LT2 / SGSC1412 / ATCC 700720).